Consider the following 588-residue polypeptide: MSGFDAVLLVAVLLLALIVLGAVLVGVRAVRGIAGAPRPEDPAFIAEKDRQEQSLAALRSAADEANSTVDAAKSAAAAARTEAAAARAEAKAARAEARRVLDGARAEADTILERVHKQAEADAEQLRTAARRSGEREAAVLATTTREQAAEVERRAARMDDRERLHSEEVERLAERDRQLSAASAALAARESTLVDRDRELAQAEDRRRRELERVAGITAEAARGELVEAIEAQAKREAALLVREIESEARNTGEERARHIVVDAIQRVASEQTAESVVSVLHLPGDEMKGRIIGREGRNIRAFESVTGVNLIIDDTPEAVLLSCFDPVRREVGRLTLEKLVLDGRIHPHRIEEVHDLARQEVVQLCQRAAEDALVEVGITEIHPELVSLLGRLRYRTSYGQNVLKHLVETAHIAGIMAAELRLDVPTIKRCAFLHDIGKALTHEVEGSHAIVGADVARKYGESEDVVHAIEAHHNEVPPQTIEAVLTQASDACSGGRPGARRESLEAYVRRLERIEEIAAGKLGVERVFAMQAGREVRVMVRPEDVDDISASVLARDVAKQIEEELTYPGQIRVTVVRESRVTEIAR.

A helical transmembrane segment spans residues 7–27 (VLLVAVLLLALIVLGAVLVGV). Positions 130–162 (ARRSGEREAAVLATTTREQAAEVERRAARMDDR) are disordered. Over residues 148–162 (QAAEVERRAARMDDR) the composition is skewed to basic and acidic residues. The KH domain occupies 278–359 (VVSVLHLPGD…HRIEEVHDLA (82 aa)). The HD domain occupies 404 to 497 (VLKHLVETAH…TQASDACSGG (94 aa)).

Belongs to the RNase Y family.

It localises to the cell membrane. Its function is as follows. Endoribonuclease that initiates mRNA decay. This Salinispora arenicola (strain CNS-205) protein is Ribonuclease Y.